Reading from the N-terminus, the 134-residue chain is Small ribosomal subunit protein uS8c (134 aa).

It belongs to the universal ribosomal protein uS8 family. Part of the 30S ribosomal subunit.

The protein localises to the plastid. It localises to the chloroplast. Its function is as follows. One of the primary rRNA binding proteins, it binds directly to 16S rRNA central domain where it helps coordinate assembly of the platform of the 30S subunit. The sequence is that of Small ribosomal subunit protein uS8c (rps8) from Helianthus annuus (Common sunflower).